Here is a 106-residue protein sequence, read N- to C-terminus: Iron-sulfur cluster assembly protein CyaY (106 aa).

Belongs to the frataxin family.

Involved in iron-sulfur (Fe-S) cluster assembly. May act as a regulator of Fe-S biogenesis. The chain is Iron-sulfur cluster assembly protein CyaY from Cronobacter sakazakii (strain ATCC BAA-894) (Enterobacter sakazakii).